The sequence spans 61 residues: Large ribosomal subunit protein uL30 (61 aa).

It belongs to the universal ribosomal protein uL30 family. Part of the 50S ribosomal subunit.

In Colwellia psychrerythraea (strain 34H / ATCC BAA-681) (Vibrio psychroerythus), this protein is Large ribosomal subunit protein uL30.